Here is a 1015-residue protein sequence, read N- to C-terminus: Probable beta-galactosidase B (1015 aa).

A signal peptide spans 1 to 21 (MAHIYRLLLLLLSNLWFSAAA). An N-linked (GlcNAc...) asparagine glycan is attached at N23. Residue Y90 participates in substrate binding. An N-linked (GlcNAc...) asparagine glycan is attached at N100. N135, A136, and E137 together coordinate substrate. N172 is a glycosylation site (N-linked (GlcNAc...) asparagine). N195 is a substrate binding site. E196 serves as the catalytic Proton donor. Residue N211 is glycosylated (N-linked (GlcNAc...) asparagine). Residue Y265 participates in substrate binding. Cysteines 271 and 324 form a disulfide. The Nucleophile role is filled by E308. Substrate is bound at residue Y373. N-linked (GlcNAc...) asparagine glycosylation is found at N411, N441, N456, N554, N679, N735, N775, N821, and N878.

It belongs to the glycosyl hydrolase 35 family.

The protein localises to the secreted. It carries out the reaction Hydrolysis of terminal non-reducing beta-D-galactose residues in beta-D-galactosides.. Cleaves beta-linked terminal galactosyl residues from gangliosides, glycoproteins, and glycosaminoglycans. In Neosartorya fischeri (strain ATCC 1020 / DSM 3700 / CBS 544.65 / FGSC A1164 / JCM 1740 / NRRL 181 / WB 181) (Aspergillus fischerianus), this protein is Probable beta-galactosidase B (lacB).